Here is a 1023-residue protein sequence, read N- to C-terminus: Lon protease homolog (1023 aa).

515–522 lines the ATP pocket; the sequence is GPPGVGKT. The region spanning 810-1003 is the Lon proteolytic domain; that stretch reads TNMIGVINGL…IEIITDPNVI (194 aa). Ser906 is an active-site residue.

This sequence belongs to the peptidase S16 family.

In Acanthamoeba polyphaga (Amoeba), this protein is Lon protease homolog.